The following is a 207-amino-acid chain: N-(5'-phosphoribosyl)anthranilate isomerase (207 aa).

It belongs to the TrpF family.

The enzyme catalyses N-(5-phospho-beta-D-ribosyl)anthranilate = 1-(2-carboxyphenylamino)-1-deoxy-D-ribulose 5-phosphate. It participates in amino-acid biosynthesis; L-tryptophan biosynthesis; L-tryptophan from chorismate: step 3/5. The polypeptide is N-(5'-phosphoribosyl)anthranilate isomerase (Petrotoga mobilis (strain DSM 10674 / SJ95)).